A 185-amino-acid chain; its full sequence is Large ribosomal subunit protein uL30 (185 aa).

The protein belongs to the universal ribosomal protein uL30 family. In terms of assembly, part of the 50S ribosomal subunit.

This chain is Large ribosomal subunit protein uL30, found in Caldivirga maquilingensis (strain ATCC 700844 / DSM 13496 / JCM 10307 / IC-167).